Here is a 100-residue protein sequence, read N- to C-terminus: Small ribosomal subunit protein uS14c (100 aa).

Belongs to the universal ribosomal protein uS14 family. In terms of assembly, part of the 30S ribosomal subunit.

It localises to the plastid. It is found in the chloroplast. Its function is as follows. Binds 16S rRNA, required for the assembly of 30S particles. This is Small ribosomal subunit protein uS14c from Aethionema cordifolium (Lebanon stonecress).